A 58-amino-acid chain; its full sequence is Large ribosomal subunit protein uL30 (58 aa).

This sequence belongs to the universal ribosomal protein uL30 family. In terms of assembly, part of the 50S ribosomal subunit.

This chain is Large ribosomal subunit protein uL30, found in Azotobacter vinelandii (strain DJ / ATCC BAA-1303).